Consider the following 365-residue polypeptide: Flagellin 1 (365 aa).

The protein belongs to the bacterial flagellin family.

Its subcellular location is the secreted. The protein resides in the bacterial flagellum. Functionally, flagellin is the subunit protein which polymerizes to form the filaments of bacterial flagella. The protein is Flagellin 1 (fliC1) of Proteus mirabilis.